The chain runs to 444 residues: tRNA modification GTPase MnmE (444 aa).

(6S)-5-formyl-5,6,7,8-tetrahydrofolate contacts are provided by R21, E79, and K118. Residues 215–365 (GLNVVIVGKP…LVNEIKTNLK (151 aa)) form the TrmE-type G domain. N225 is a binding site for K(+). Residues 225-230 (NVGKSS), 244-250 (SDIKGTT), and 269-272 (DTAG) each bind GTP. S229 contacts Mg(2+). S244, I246, and T249 together coordinate K(+). A Mg(2+)-binding site is contributed by T250. Residue K444 coordinates (6S)-5-formyl-5,6,7,8-tetrahydrofolate.

The protein belongs to the TRAFAC class TrmE-Era-EngA-EngB-Septin-like GTPase superfamily. TrmE GTPase family. As to quaternary structure, homodimer. Heterotetramer of two MnmE and two MnmG subunits. K(+) serves as cofactor.

It localises to the cytoplasm. Its function is as follows. Exhibits a very high intrinsic GTPase hydrolysis rate. Involved in the addition of a carboxymethylaminomethyl (cmnm) group at the wobble position (U34) of certain tRNAs, forming tRNA-cmnm(5)s(2)U34. The chain is tRNA modification GTPase MnmE from Malacoplasma penetrans (strain HF-2) (Mycoplasma penetrans).